A 394-amino-acid chain; its full sequence is Carbamoyl phosphate synthase small chain (394 aa).

Residues 1–188 form a CPSase region; the sequence is MIRKERAILA…ALPYAFPTLR (188 aa). Residues serine 49, glycine 240, and glycine 242 each contribute to the L-glutamine site. In terms of domain architecture, Glutamine amidotransferase type-1 spans 192 to 379; sequence RVVLMDFGIK…IEEIDAFDGG (188 aa). The active-site Nucleophile is the cysteine 267. Positions 268, 271, 309, 311, and 312 each coordinate L-glutamine. Residues histidine 352 and glutamate 354 contribute to the active site.

It belongs to the CarA family. In terms of assembly, composed of two chains; the small (or glutamine) chain promotes the hydrolysis of glutamine to ammonia, which is used by the large (or ammonia) chain to synthesize carbamoyl phosphate. Tetramer of heterodimers (alpha,beta)4.

The enzyme catalyses hydrogencarbonate + L-glutamine + 2 ATP + H2O = carbamoyl phosphate + L-glutamate + 2 ADP + phosphate + 2 H(+). The catalysed reaction is L-glutamine + H2O = L-glutamate + NH4(+). It participates in amino-acid biosynthesis; L-arginine biosynthesis; carbamoyl phosphate from bicarbonate: step 1/1. The protein operates within pyrimidine metabolism; UMP biosynthesis via de novo pathway; (S)-dihydroorotate from bicarbonate: step 1/3. In terms of biological role, small subunit of the glutamine-dependent carbamoyl phosphate synthetase (CPSase). CPSase catalyzes the formation of carbamoyl phosphate from the ammonia moiety of glutamine, carbonate, and phosphate donated by ATP, constituting the first step of 2 biosynthetic pathways, one leading to arginine and/or urea and the other to pyrimidine nucleotides. The small subunit (glutamine amidotransferase) binds and cleaves glutamine to supply the large subunit with the substrate ammonia. This Deinococcus radiodurans (strain ATCC 13939 / DSM 20539 / JCM 16871 / CCUG 27074 / LMG 4051 / NBRC 15346 / NCIMB 9279 / VKM B-1422 / R1) protein is Carbamoyl phosphate synthase small chain.